We begin with the raw amino-acid sequence, 430 residues long: Enolase (430 aa).

Residue Q168 coordinates (2R)-2-phosphoglycerate. Catalysis depends on E210, which acts as the Proton donor. Positions 247, 288, and 315 each coordinate Mg(2+). (2R)-2-phosphoglycerate is bound by residues K340, R369, S370, and K391. K340 (proton acceptor) is an active-site residue.

This sequence belongs to the enolase family. Mg(2+) is required as a cofactor.

It is found in the cytoplasm. The protein localises to the secreted. The protein resides in the cell surface. The catalysed reaction is (2R)-2-phosphoglycerate = phosphoenolpyruvate + H2O. It participates in carbohydrate degradation; glycolysis; pyruvate from D-glyceraldehyde 3-phosphate: step 4/5. Its function is as follows. Catalyzes the reversible conversion of 2-phosphoglycerate (2-PG) into phosphoenolpyruvate (PEP). It is essential for the degradation of carbohydrates via glycolysis. In Rippkaea orientalis (strain PCC 8801 / RF-1) (Cyanothece sp. (strain PCC 8801)), this protein is Enolase.